A 151-amino-acid polypeptide reads, in one-letter code: MKPDTRTGGGPSQRMLRVGELVRHALADVLQRGSVTDPVLAAHIITVPEVRMSPDLKIATCYVMPLGGKDITPVIKALAANARYLRLEVGRRMELKSVPELRFREDTSFDEGARMDALLRSPKVVRDLDDTSSDDTSPDANTDTDKETDAE.

Residues 120–151 form a disordered region; sequence RSPKVVRDLDDTSSDDTSPDANTDTDKETDAE.

It belongs to the RbfA family. As to quaternary structure, monomer. Binds 30S ribosomal subunits, but not 50S ribosomal subunits or 70S ribosomes.

It is found in the cytoplasm. One of several proteins that assist in the late maturation steps of the functional core of the 30S ribosomal subunit. Associates with free 30S ribosomal subunits (but not with 30S subunits that are part of 70S ribosomes or polysomes). Required for efficient processing of 16S rRNA. May interact with the 5'-terminal helix region of 16S rRNA. The chain is Ribosome-binding factor A from Xanthobacter autotrophicus (strain ATCC BAA-1158 / Py2).